The following is a 249-amino-acid chain: Vesicle-associated membrane protein-associated protein A (249 aa).

Ala-2 is modified (N-acetylalanine). The Cytoplasmic segment spans residues 2–227; that stretch reads ASASGTMAKH…VSFRENVTSP (226 aa). The MSP domain maps to 14-131; that stretch reads ILVLDPPTDL…MDSKLRCVFE (118 aa). The phosphorylated FFAT motif binding stretch occupies residues 50 to 53; sequence KVKT. An N6-acetyllysine modification is found at Lys-125. Ser-166 is modified (phosphoserine). Positions 169 to 205 form a coiled coil; sequence DTETRKLVEECKRLQGEMMKLSEENRLLRDEGLRLRK. The residue at position 170 (Thr-170) is a Phosphothreonine. 3 positions are modified to phosphoserine: Ser-214, Ser-216, and Ser-219. The chain crosses the membrane as a helical; Anchor for type IV membrane protein span at residues 228–248; it reads LPSLLVVIAAIFIGFFLGKFI.

This sequence belongs to the VAMP-associated protein (VAP) (TC 9.B.17) family. As to quaternary structure, homodimer; disulfide-linked. Heterodimer with VAPB. Interacts with VAMP1, VAMP2, STX1A, BET1, SEC22C and with the C-terminal domain of OCLN. Interacts (via MSP domain) with OSBPL1A (via FFAT motif). Interacts (via MSP domain) with ZFYVE27; may retain ZFYVE27 in the endoplasmic reticulum and regulate its function in cell projections formation. Interacts with OSBP. Interacts (via C-terminus) with RSAD2/viperin (via C-terminus). Interacts with IFITM3. Interacts with OSBPL3 (phosphorylated form). Interacts with KIF5A in a ZFYVE27-dependent manner. Interacts (via MSP domain) with STARD3 (via phosphorylated FFAT motif); this interaction recruits VAPA to the endosome. Interacts with STARD3NL (via FFAT motif). Interacts with CERT1. Interacts with PLEKHA3 and SACM1L to form a ternary complex. Interacts with VPS13A (via FFAT motif). Interacts with RB1CC1 (via phosphorylated FFAT motif), MIGA2 (via phosphorylated FFAT motif), RMDN3 (via phosphorylated FFAT motif), KCNB1 (via phosphorylated FFAT motif) and KCNB2 (via phosphorylated FFAT motif). Interacts (via MSP domain) with WDR44 (via FFAT-like motif); the interactions connect the endoplasmic reticulum (ER) with the endosomal tubule.

It is found in the endoplasmic reticulum membrane. Its subcellular location is the cell junction. The protein resides in the tight junction. The protein localises to the cell membrane. Functionally, endoplasmic reticulum (ER)-anchored protein that mediates the formation of contact sites between the ER and endosomes via interaction with FFAT motif-containing proteins such as STARD3 or WDR44. STARD3-VAPA interaction enables cholesterol transfer from the ER to endosomes. Via interaction with WDR44 participates in neosynthesized protein export. In addition, recruited to the plasma membrane through OSBPL3 binding. The OSBPL3-VAPA complex stimulates RRAS signaling which in turn attenuates integrin beta-1 (ITGB1) activation at the cell surface. With OSBPL3, may regulate ER morphology. May play a role in vesicle trafficking. The chain is Vesicle-associated membrane protein-associated protein A from Bos taurus (Bovine).